A 507-amino-acid chain; its full sequence is MGSCIGKEDPPPGATSPVHTSSTLGRESLPSHPRIPSIGPIAASSSGNTIDKNQNISQSANFVALFQYDARTDDDLSFKKDDILEILNDTQGDWWFARHKATGRTGYIPSNYVAREKSIESQPWYFGKMRRIDAEKCLLHTLNEHGAFLVRDSESRQHDLSLSVRENDSVKHYRIRQLDHGGYFIARRRPFATLHDLIAHYQREADGLCVNLGAPCAKSEAPQTTTFTYDDQWEVDRRSVRLIRQIGAGQFGEVWEGRWNVNVPVAVKKLKAGTADPTDFLAEAQIMKKLRHPKLLSLYAVCTRDEPILIVTELMQENLLTFLQRRGRQCQMPQLVEISAQVAAGMAYLEEMNFIHRDLAARNILINNSLSVKIADFGLARILMKENEYEARTGARFPIKWTAPEAANYNRFTTKSDVWSFGILLTEIVTFGRLPYPGMTNAEVLQQVDAGYRMPCPAGCPVTLYDIMQQCWRSDPDKRPTFETLQWKLEDLFNLDSSEYKEASINF.

Positions methionine 1–proline 10 are enriched in basic and acidic residues. The disordered stretch occupies residues methionine 1–lysine 52. Residue glycine 2 is the site of N-myristoyl glycine attachment. The span at isoleucine 35–glycine 47 shows a compositional bias: low complexity. An SH3 domain is found at serine 57 to serine 118. The SH2 domain maps to tryptophan 124–cysteine 216. Positions valine 240–asparagine 494 constitute a Protein kinase domain. Residues isoleucine 246 to valine 254 and lysine 268 each bind ATP. The active-site Proton acceptor is aspartate 358. Position 500 is a phosphotyrosine (tyrosine 500).

This sequence belongs to the protein kinase superfamily. Tyr protein kinase family. SRC subfamily. Mg(2+) is required as a cofactor. The cofactor is Mn(2+). Post-translationally, may be phosphorylated on Tyr-500 by csk-1. Expressed in vulva, cells around anus and pharyngeal muscles.

It catalyses the reaction L-tyrosyl-[protein] + ATP = O-phospho-L-tyrosyl-[protein] + ADP + H(+). With respect to regulation, may be inhibited by csk-1-mediated phosphorylation at Tyr-500. Non-receptor tyrosine-protein kinase which may play a role in larval and pharynx development. Unlike src-1, does not play a role in embryonic development. This is Tyrosine protein-kinase src-2 from Caenorhabditis elegans.